The following is a 710-amino-acid chain: Elongation factor G (710 aa).

The region spanning 8–297 is the tr-type G domain; sequence ERVRNIGIAA…AVVDYLPSPI (290 aa). GTP contacts are provided by residues 17-24, 96-100, and 150-153; these read AHIDAGKT, DTPGH, and NKMD.

This sequence belongs to the TRAFAC class translation factor GTPase superfamily. Classic translation factor GTPase family. EF-G/EF-2 subfamily.

It localises to the cytoplasm. Functionally, catalyzes the GTP-dependent ribosomal translocation step during translation elongation. During this step, the ribosome changes from the pre-translocational (PRE) to the post-translocational (POST) state as the newly formed A-site-bound peptidyl-tRNA and P-site-bound deacylated tRNA move to the P and E sites, respectively. Catalyzes the coordinated movement of the two tRNA molecules, the mRNA and conformational changes in the ribosome. The protein is Elongation factor G of Synechococcus sp. (strain JA-3-3Ab) (Cyanobacteria bacterium Yellowstone A-Prime).